The primary structure comprises 304 residues: Elongation factor Ts (304 aa).

The involved in Mg(2+) ion dislocation from EF-Tu stretch occupies residues 80–83; the sequence is TDFV.

This sequence belongs to the EF-Ts family.

It localises to the cytoplasm. Associates with the EF-Tu.GDP complex and induces the exchange of GDP to GTP. It remains bound to the aminoacyl-tRNA.EF-Tu.GTP complex up to the GTP hydrolysis stage on the ribosome. The polypeptide is Elongation factor Ts (Clostridium tetani (strain Massachusetts / E88)).